The sequence spans 543 residues: CTP synthase (543 aa).

The amidoligase domain stretch occupies residues Met-1 to Leu-266. Ser-14 lines the CTP pocket. Residue Ser-14 participates in UTP binding. ATP-binding positions include Ser-15–Ile-20 and Asp-72. Asp-72 and Glu-140 together coordinate Mg(2+). Residues Asp-147–Glu-149, Lys-187–Gln-192, and Lys-223 contribute to the CTP site. Residues Lys-187–Gln-192 and Lys-223 each bind UTP. Lys-239–Val-241 lines the ATP pocket. Positions Thr-291–Lys-538 constitute a Glutamine amidotransferase type-1 domain. Residue Gly-352 coordinates L-glutamine. Cys-379 (nucleophile; for glutamine hydrolysis) is an active-site residue. L-glutamine-binding positions include Leu-380–Gln-383, Glu-403, and Arg-466. Catalysis depends on residues His-511 and Glu-513.

The protein belongs to the CTP synthase family. In terms of assembly, homotetramer.

It carries out the reaction UTP + L-glutamine + ATP + H2O = CTP + L-glutamate + ADP + phosphate + 2 H(+). It catalyses the reaction L-glutamine + H2O = L-glutamate + NH4(+). The catalysed reaction is UTP + NH4(+) + ATP = CTP + ADP + phosphate + 2 H(+). The protein operates within pyrimidine metabolism; CTP biosynthesis via de novo pathway; CTP from UDP: step 2/2. Its activity is regulated as follows. Allosterically activated by GTP, when glutamine is the substrate; GTP has no effect on the reaction when ammonia is the substrate. The allosteric effector GTP functions by stabilizing the protein conformation that binds the tetrahedral intermediate(s) formed during glutamine hydrolysis. Inhibited by the product CTP, via allosteric rather than competitive inhibition. Functionally, catalyzes the ATP-dependent amination of UTP to CTP with either L-glutamine or ammonia as the source of nitrogen. Regulates intracellular CTP levels through interactions with the four ribonucleotide triphosphates. This is CTP synthase from Baumannia cicadellinicola subsp. Homalodisca coagulata.